Here is a 108-residue protein sequence, read N- to C-terminus: Urease subunit beta (108 aa).

It belongs to the urease beta subunit family. As to quaternary structure, probable heterotrimer of UreA (gamma), UreB (beta) and UreC (alpha) subunits. Three heterotrimers associate to form the active enzyme. The trimeric urease interacts with an accessory complex composed of UreD, UreF and UreG, which is required for the assembly of the nickel containing metallocenter of UreC. The UreE protein may also play a direct role in nickel transfer to the urease apoprotein.

It localises to the cytoplasm. The catalysed reaction is urea + 2 H2O + H(+) = hydrogencarbonate + 2 NH4(+). It functions in the pathway nitrogen metabolism; urea degradation; CO(2) and NH(3) from urea (urease route): step 1/1. This chain is Urease subunit beta, found in Proteus mirabilis (strain HI4320).